Here is a 180-residue protein sequence, read N- to C-terminus: GTP cyclohydrolase 1 (180 aa).

Zn(2+)-binding residues include cysteine 71, histidine 74, and cysteine 142.

It belongs to the GTP cyclohydrolase I family. As to quaternary structure, toroid-shaped homodecamer, composed of two pentamers of five dimers.

It carries out the reaction GTP + H2O = 7,8-dihydroneopterin 3'-triphosphate + formate + H(+). Its pathway is cofactor biosynthesis; 7,8-dihydroneopterin triphosphate biosynthesis; 7,8-dihydroneopterin triphosphate from GTP: step 1/1. The sequence is that of GTP cyclohydrolase 1 (folE) from Helicobacter pylori (strain ATCC 700392 / 26695) (Campylobacter pylori).